We begin with the raw amino-acid sequence, 514 residues long: Prolyl 3,4-dihydroxylase OGFOD1 (514 aa).

In terms of domain architecture, Fe2OG dioxygenase spans 114-221 (GAVDCSCNIY…RVSISGWFHT (108 aa)). Positions 132 and 134 each coordinate Fe cation. Tyr146 contacts 2-oxoglutarate. His200 is a binding site for Fe cation. Arg212 is a binding site for 2-oxoglutarate.

Belongs to the TPA1 family. In terms of assembly, monomer and homodimer. Fe(2+) serves as cofactor. L-ascorbate is required as a cofactor.

It catalyses the reaction [ribosomal protein uS12]-L-proline + 2-oxoglutarate + O2 = [ribosomal protein uS12]-(3S)-3-hydroxy-L-proline + succinate + CO2. The enzyme catalyses [ribosomal protein uS12]-(3S)-3-hydroxy-L-proline + 2-oxoglutarate + O2 = [ribosomal protein uS12]-(3S)-3,4-dihydroxy-L-proline + succinate + CO2. Its function is as follows. Prolyl 3,4-dihydroxylase that catalyzes 3,4-dihydroxylation of 'Pro-61' of small ribosomal subunit uS12 (RPS23), thereby regulating protein translation termination efficiency. This is Prolyl 3,4-dihydroxylase OGFOD1 (Ogd) from Ostreococcus tauri.